Reading from the N-terminus, the 447-residue chain is Tol-Pal system protein TolB (447 aa).

The signal sequence occupies residues 1 to 34 (MSSRLPALPLSRRQALLGGAGSAAALLLPGGAQA). Positions 426 to 447 (RNEQKVPTPGFASDPAWSPLLS) are disordered.

It belongs to the TolB family. The Tol-Pal system is composed of five core proteins: the inner membrane proteins TolA, TolQ and TolR, the periplasmic protein TolB and the outer membrane protein Pal. They form a network linking the inner and outer membranes and the peptidoglycan layer.

It is found in the periplasm. Its function is as follows. Part of the Tol-Pal system, which plays a role in outer membrane invagination during cell division and is important for maintaining outer membrane integrity. The chain is Tol-Pal system protein TolB from Rhodopseudomonas palustris (strain BisB18).